The following is a 480-amino-acid chain: Probable glycosyltransferase 2 (480 aa).

Positions 1-21 (MGQEGMGYNNGKGGGGGGGGL) are enriched in gly residues. The segment at 1 to 45 (MGQEGMGYNNGKGGGGGGGGLPMTAPRPRGASPLSSHGHHHRSRK) is disordered. At 1–49 (MGQEGMGYNNGKGGGGGGGGLPMTAPRPRGASPLSSHGHHHRSRKIHRT) the chain is on the cytoplasmic side. A helical; Signal-anchor for type II membrane protein membrane pass occupies residues 50 to 72 (FNNVKITVLCGLVTILVLRGTIG). At 73-480 (LNLSLPNQPT…DVKAKISTTS (408 aa)) the chain is on the lumenal side. Asparagine 74, asparagine 124, asparagine 129, and asparagine 458 each carry an N-linked (GlcNAc...) asparagine glycan.

It belongs to the glycosyltransferase 34 family.

It is found in the golgi apparatus membrane. In terms of biological role, probable glycosyltransferase that may be involved in the biosynthesis of xyloglucan. This chain is Probable glycosyltransferase 2, found in Oryza sativa subsp. indica (Rice).